Reading from the N-terminus, the 163-residue chain is S-fimbrial adhesin protein SfaS (163 aa).

The N-terminal stretch at methionine 1 to alanine 22 is a signal peptide. Residues cysteine 38 and cysteine 75 are joined by a disulfide bond. Positions lysine 138–lysine 144 are involved in sialic acid binding.

This sequence belongs to the fimbrial protein family.

It is found in the fimbrium. Fimbriae (also called pili), polar filaments radiating from the surface of the bacterium to a length of 0.5-1.5 micrometers and numbering 100-300 per cell, enable bacteria to colonize the epithelium of specific host organs. Functionally, a minor fimbrial subunit, this protein is necessary for full expression of S-specific binding. S-fimbrial adhesins enable pathogenic E.coli causing urinary-tract infections or newborn meningitis to attach to glycoproteins terminating with alpha-sialic acid-(2-3)-beta-Gal. This protein binds to the alpha-sialic acid-(2-3)-beta-Gal and is thus responsible for erythrocyte recognition and hemagglutination. The polypeptide is S-fimbrial adhesin protein SfaS (sfaS) (Escherichia coli O6:K15:H31 (strain 536 / UPEC)).